Consider the following 173-residue polypeptide: Shikimate kinase 1 (173 aa).

Gly-14 to Thr-19 is an ATP binding site. Mg(2+) is bound at residue Ser-18. Substrate is bound by residues Asp-36, Arg-60, and Gly-82. Position 120 (Arg-120) interacts with ATP. Arg-140 provides a ligand contact to substrate. Residue Gln-157 coordinates ATP.

This sequence belongs to the shikimate kinase family. Monomer. It depends on Mg(2+) as a cofactor.

It is found in the cytoplasm. It carries out the reaction shikimate + ATP = 3-phosphoshikimate + ADP + H(+). The protein operates within metabolic intermediate biosynthesis; chorismate biosynthesis; chorismate from D-erythrose 4-phosphate and phosphoenolpyruvate: step 5/7. Catalyzes the specific phosphorylation of the 3-hydroxyl group of shikimic acid using ATP as a cosubstrate. The chain is Shikimate kinase 1 from Enterobacter sp. (strain 638).